The sequence spans 187 residues: MPKINGNEIRPGNVLEHNGGLWAAVKVDHVKPGKGGAFAQVELRNLRNGSKLNERFRSADKVERVRLEQKDQQFLYESDGMLVFMDAETYEQIELPAELLGERRPFLQDGMTIVVEFHDDEALNASLPQKVVCKVVETEPVVKGQTAANSFKPAILDNGVKVMVPPFVGQDEDIVVNTETMDYSERA.

It belongs to the elongation factor P family.

Its subcellular location is the cytoplasm. It functions in the pathway protein biosynthesis; polypeptide chain elongation. Functionally, involved in peptide bond synthesis. Stimulates efficient translation and peptide-bond synthesis on native or reconstituted 70S ribosomes in vitro. Probably functions indirectly by altering the affinity of the ribosome for aminoacyl-tRNA, thus increasing their reactivity as acceptors for peptidyl transferase. The polypeptide is Elongation factor P (Jannaschia sp. (strain CCS1)).